We begin with the raw amino-acid sequence, 309 residues long: Taste receptor type 2 member 66 (309 aa).

A topological domain (extracellular) is located at residue Met-1. A helical transmembrane segment spans residues 2–22; it reads ITFLPIIFSILIVVTFVIGNF. Topologically, residues 23–46 are cytoplasmic; it reads ANGFIALANSIEWFKRQKISFADQ. Residues 47–67 traverse the membrane as a helical segment; the sequence is ILTALAVPRVGLLWVLLLNWY. The Extracellular segment spans residues 68 to 86; that stretch reads ATELNPAFYSIEVRITAYN. Residues 87–107 traverse the membrane as a helical segment; the sequence is LWAVINHFSNWLATSLSIFYL. The Cytoplasmic portion of the chain corresponds to 108–126; the sequence is LKIANFSNLIFLRLKRRVK. The helical transmembrane segment at 127 to 147 threads the bilayer; sequence SVVLVILLGPLLFLVCHLFVI. Topologically, residues 148–178 are extracellular; the sequence is NMNQIIWTKEYEGNMTWKIKLRSAMYLSNTT. 2 N-linked (GlcNAc...) asparagine glycosylation sites follow: Asn-161 and Asn-176. The helical transmembrane segment at 179–199 threads the bilayer; sequence VTILANLVPFTVTLISFLLLV. Topologically, residues 200 to 229 are cytoplasmic; that stretch reads CSLCKHLKKMQLHGKGSQDPSTKVHIKALQ. The chain crosses the membrane as a helical span at residues 230-250; sequence TVISFLLLCAIYFVSVIISVW. The Extracellular segment spans residues 251–259; it reads SFKNLENKP. The helical transmembrane segment at 260–280 threads the bilayer; sequence VFMFCQAIGFSCSSAHPFILI. At 281 to 309 the chain is on the cytoplasmic side; that stretch reads WGNKKLKQPFLSVLWQMRYWVKGEKPSSS.

The protein belongs to the G-protein coupled receptor T2R family.

It localises to the membrane. Receptor that may play a role in the perception of bitterness and is gustducin-linked. May play a role in sensing the chemical composition of the gastrointestinal content. The activity of this receptor may stimulate alpha gustducin, mediate PLC-beta-2 activation and lead to the gating of TRPM5. The sequence is that of Taste receptor type 2 member 66 (TAS2R66) from Pan paniscus (Pygmy chimpanzee).